Reading from the N-terminus, the 532-residue chain is 2,3-bisphosphoglycerate-independent phosphoglycerate mutase (532 aa).

Mn(2+) is bound by residues Asp15 and Ser65. Ser65 acts as the Phosphoserine intermediate in catalysis. Residues His126, 156–157 (RD), Arg188, Arg194, 258–261 (RPDR), and Lys331 contribute to the substrate site. The Mn(2+) site is built by Asp398, His402, Asp439, His440, and His457.

Belongs to the BPG-independent phosphoglycerate mutase family. Monomer. It depends on Mn(2+) as a cofactor.

The enzyme catalyses (2R)-2-phosphoglycerate = (2R)-3-phosphoglycerate. It participates in carbohydrate degradation; glycolysis; pyruvate from D-glyceraldehyde 3-phosphate: step 3/5. Its function is as follows. Catalyzes the interconversion of 2-phosphoglycerate and 3-phosphoglycerate. The sequence is that of 2,3-bisphosphoglycerate-independent phosphoglycerate mutase from Cyanothece sp. (strain PCC 7425 / ATCC 29141).